Here is a 181-residue protein sequence, read N- to C-terminus: Adenylyl-sulfate kinase (181 aa).

12–19 (GLSGAGKS) contributes to the ATP binding site. The active-site Phosphoserine intermediate is Ser-86.

This sequence belongs to the APS kinase family.

It carries out the reaction adenosine 5'-phosphosulfate + ATP = 3'-phosphoadenylyl sulfate + ADP + H(+). Its pathway is sulfur metabolism; hydrogen sulfide biosynthesis; sulfite from sulfate: step 2/3. Catalyzes the synthesis of activated sulfate. The chain is Adenylyl-sulfate kinase from Microcystis aeruginosa (strain NIES-843 / IAM M-2473).